We begin with the raw amino-acid sequence, 264 residues long: MDSRPIGFLDSGVGGLTVVKEMFRQLPEEEVIFIGDQARAPYGPRPAQQIREFTWQMVNFLLTKNVKMIVIACNTATAVAWQEIKEKLDIPVLGVILPGASAAIKSTNLGKVGIIGTPMTVKSDAYRQKIQALSPNTAVVSLACPKFVPIVESNQMSSSLAKKVVYETLSPLVGKLDTLILGCTHYPLLRPIIQNVMGAEVKLIDSGAETVRDISVLLNYFEINHNWQNKHGGHHFYTTASPKGFKEIAEQWLSQEINVERIVL.

Substrate is bound by residues Asp10–Ser11 and Tyr42–Gly43. The active-site Proton donor/acceptor is Cys73. Asn74 to Thr75 provides a ligand contact to substrate. Catalysis depends on Cys183, which acts as the Proton donor/acceptor. A substrate-binding site is contributed by Thr184–His185.

Belongs to the aspartate/glutamate racemases family.

It catalyses the reaction L-glutamate = D-glutamate. It participates in cell wall biogenesis; peptidoglycan biosynthesis. Provides the (R)-glutamate required for cell wall biosynthesis. This Streptococcus agalactiae serotype Ia (strain ATCC 27591 / A909 / CDC SS700) protein is Glutamate racemase.